A 407-amino-acid chain; its full sequence is Protein phosphatase methylesterase 1 (407 aa).

The disordered stretch occupies residues 1–53 (MSDLQKSFAKSKLAKLPPEPPPIPESVADEDDDSGSSTETVTPSPVKQLFARP). Active-site residues include Ser185, Asp211, and His342. Over residues 388 to 401 (GAGVPLGKAEGGTT) the composition is skewed to gly residues. The tract at residues 388–407 (GAGVPLGKAEGGTTGSFKRS) is disordered.

The protein belongs to the AB hydrolase superfamily.

The enzyme catalyses [phosphatase 2A protein]-C-terminal L-leucine methyl ester + H2O = [phosphatase 2A protein]-C-terminal L-leucine + methanol + H(+). Functionally, demethylates proteins that have been reversibly carboxymethylated. Demethylates the phosphatase PP2A catalytic subunit. This chain is Protein phosphatase methylesterase 1 (ppe1), found in Emericella nidulans (strain FGSC A4 / ATCC 38163 / CBS 112.46 / NRRL 194 / M139) (Aspergillus nidulans).